The chain runs to 149 residues: Transcriptional regulator MraZ (149 aa).

2 consecutive SpoVT-AbrB domains span residues 7–54 (KYVN…GISH) and 83–126 (AVQL…QPQN).

Belongs to the MraZ family. In terms of assembly, forms oligomers.

The protein localises to the cytoplasm. It is found in the nucleoid. The sequence is that of Transcriptional regulator MraZ from Rickettsia rickettsii (strain Sheila Smith).